A 300-amino-acid chain; its full sequence is MLLFFCIFVVFLCVLNFFTSNVLVWWSVFLLMTVVFVCLSKGSGSYVGILNYFVIQESLGLFFLVFNVFLLQFFIVMMKVGVAPFHFWVFSVTGSLYDWLLMWFLTFQKLPFLPVLVQLFDFSAFFIFLFGICVCYFQLFVLKGYKSMMVISSTESFNWVVLTCFLSVVNVIYLFFYYVVLMAFLMPNFNVKDFNFVNWEVLLVFLNVPFSVSFFIKIFVLSEVFKLDGLFLLFLLLMMFLSMLCFSLWLVNMSVKNMKMLGDNFKVLFFLVFPMMVFSVIYYFSKILLCRLDKAEFFLK.

Transmembrane regions (helical) follow at residues 4–24, 29–49, 58–78, 87–107, 122–142, 165–185, 201–221, 231–251, and 267–287; these read FFCI…NVLV, FLLM…YVGI, SLGL…IVMM, FWVF…FLTF, FSAF…LFVL, FLSV…MAFL, VLLV…IFVL, FLLF…LWLV, and VLFF…FSKI.

It belongs to the complex I subunit 2 family.

The protein resides in the mitochondrion inner membrane. The enzyme catalyses a ubiquinone + NADH + 5 H(+)(in) = a ubiquinol + NAD(+) + 4 H(+)(out). Its function is as follows. Core subunit of the mitochondrial membrane respiratory chain NADH dehydrogenase (Complex I) that is believed to belong to the minimal assembly required for catalysis. Complex I functions in the transfer of electrons from NADH to the respiratory chain. The immediate electron acceptor for the enzyme is believed to be ubiquinone. The sequence is that of NADH-ubiquinone oxidoreductase chain 2 (ND2) from Ascaris suum (Pig roundworm).